The following is a 405-amino-acid chain: Arginine biosynthesis bifunctional protein ArgJ (405 aa).

Substrate is bound by residues Thr-152, Lys-178, Thr-189, Glu-276, Asn-400, and Thr-405. Residue Thr-189 is the Nucleophile of the active site.

The protein belongs to the ArgJ family. In terms of assembly, heterotetramer of two alpha and two beta chains.

The protein resides in the cytoplasm. The enzyme catalyses N(2)-acetyl-L-ornithine + L-glutamate = N-acetyl-L-glutamate + L-ornithine. It carries out the reaction L-glutamate + acetyl-CoA = N-acetyl-L-glutamate + CoA + H(+). It functions in the pathway amino-acid biosynthesis; L-arginine biosynthesis; L-ornithine and N-acetyl-L-glutamate from L-glutamate and N(2)-acetyl-L-ornithine (cyclic): step 1/1. It participates in amino-acid biosynthesis; L-arginine biosynthesis; N(2)-acetyl-L-ornithine from L-glutamate: step 1/4. Functionally, catalyzes two activities which are involved in the cyclic version of arginine biosynthesis: the synthesis of N-acetylglutamate from glutamate and acetyl-CoA as the acetyl donor, and of ornithine by transacetylation between N(2)-acetylornithine and glutamate. The sequence is that of Arginine biosynthesis bifunctional protein ArgJ from Pseudomonas aeruginosa (strain ATCC 15692 / DSM 22644 / CIP 104116 / JCM 14847 / LMG 12228 / 1C / PRS 101 / PAO1).